A 362-amino-acid chain; its full sequence is Sulfate/thiosulfate import ATP-binding protein CysA (362 aa).

The ABC transporter domain occupies 3–237 (IEINNISKYF…PASRFVMEFL (235 aa)). 35-42 (GPSGSGKT) is an ATP binding site.

This sequence belongs to the ABC transporter superfamily. Sulfate/tungstate importer (TC 3.A.1.6) family. As to quaternary structure, the complex is composed of two ATP-binding proteins (CysA), two transmembrane proteins (CysT and CysW) and a solute-binding protein (CysP).

It localises to the cell inner membrane. The enzyme catalyses sulfate(out) + ATP + H2O = sulfate(in) + ADP + phosphate + H(+). It catalyses the reaction thiosulfate(out) + ATP + H2O = thiosulfate(in) + ADP + phosphate + H(+). Functionally, part of the ABC transporter complex CysAWTP involved in sulfate/thiosulfate import. Responsible for energy coupling to the transport system. This is Sulfate/thiosulfate import ATP-binding protein CysA from Photorhabdus laumondii subsp. laumondii (strain DSM 15139 / CIP 105565 / TT01) (Photorhabdus luminescens subsp. laumondii).